The sequence spans 357 residues: Sorbitol dehydrogenase (357 aa).

Ala2 is modified (N-acetylalanine). Cys45 provides a ligand contact to Zn(2+). A substrate-binding site is contributed by Tyr51. 2 residues coordinate Zn(2+): His70 and Glu71. Glu156 is a substrate binding site. Phosphoserine is present on Ser169. NAD(+) is bound by residues Val184, Asp204, Arg209, 273 to 275 (VGM), and 297 to 299 (VFR). Substrate-binding residues include Arg299 and Tyr300.

Belongs to the zinc-containing alcohol dehydrogenase family. As to quaternary structure, homotetramer. Zn(2+) is required as a cofactor. As to expression, testis has the highest level of expression, followed by kidney, liver, and lung. Low levels of expression are also observed in lens, brain, and skeletal muscle. Expressed in sperm flagellum and very low expression in the sperm head.

Its subcellular location is the mitochondrion membrane. It is found in the cell projection. The protein resides in the cilium. The protein localises to the flagellum. The enzyme catalyses keto-D-fructose + NADH + H(+) = D-sorbitol + NAD(+). It catalyses the reaction xylitol + NAD(+) = D-xylulose + NADH + H(+). It carries out the reaction L-iditol + NAD(+) = keto-L-sorbose + NADH + H(+). With respect to regulation, inhibited in vitro by p-hydroxymercuribenzoate, EDTA, l,l0-phenanthroline and N-ethylmaleimide. Polyol dehydrogenase that catalyzes the reversible NAD(+)-dependent oxidation of various sugar alcohols. Is active with D-sorbitol (D-glucitol) leading to the C2-oxidized product D-fructose. Is a key enzyme in the polyol pathway that interconverts glucose and fructose via sorbitol, which constitutes an important alternate route for glucose metabolism. May play a role in sperm motility by using sorbitol as an alternative energy source for sperm motility and protein tyrosine phosphorylation. Has no activity on ethanol. Cannot use NADP(+) as the electron acceptor. The sequence is that of Sorbitol dehydrogenase (Sord) from Mus musculus (Mouse).